The following is a 96-amino-acid chain: Small ribosomal subunit protein bS6 (96 aa).

Belongs to the bacterial ribosomal protein bS6 family.

Functionally, binds together with bS18 to 16S ribosomal RNA. The protein is Small ribosomal subunit protein bS6 of Carboxydothermus hydrogenoformans (strain ATCC BAA-161 / DSM 6008 / Z-2901).